We begin with the raw amino-acid sequence, 233 residues long: Ion-translocating oxidoreductase complex subunit E (233 aa).

Transmembrane regions (helical) follow at residues 18–38, 39–59, 69–89, 92–112, 128–148, and 182–202; these read ALVQ…ATNA, LGLG…VSAL, IPIY…LINA, FGLY…CIVI, ALDG…LGAL, and PFLL…LLAG.

Belongs to the NqrDE/RnfAE family. The complex is composed of six subunits: RnfA, RnfB, RnfC, RnfD, RnfE and RnfG.

Its subcellular location is the cell inner membrane. Part of a membrane-bound complex that couples electron transfer with translocation of ions across the membrane. This Yersinia pseudotuberculosis serotype O:3 (strain YPIII) protein is Ion-translocating oxidoreductase complex subunit E.